The chain runs to 278 residues: Ras-related protein rapC (278 aa).

Residue 10–17 (GASGTGKT) coordinates GTP. Positions 32–40 (YDPTIEDLY) match the Effector region motif. Residues 58-62 (DTSGT) and 119-122 (NKCD) each bind GTP. Disordered regions lie at residues 176–209 (NGSSNGKDKKDKKEKKTHKKDSGSNNSSINSSSS) and 236–278 (STSS…CLIM). 2 stretches are compositionally biased toward low complexity: residues 198–209 (GSNNSSINSSSS) and 236–251 (STSSTSVNNLNQSQTN). The residue at position 275 (Cys-275) is a Cysteine methyl ester. Cys-275 carries the S-geranylgeranyl cysteine lipid modification. Residues 276–278 (LIM) constitute a propeptide, removed in mature form.

Belongs to the small GTPase superfamily. Ras family.

It is found in the cell membrane. It carries out the reaction GTP + H2O = GDP + phosphate + H(+). This Dictyostelium discoideum (Social amoeba) protein is Ras-related protein rapC (rapC).